Consider the following 409-residue polypeptide: Potassium channel subfamily K member 3 (409 aa).

The Cytoplasmic segment spans residues M1–T8. Residues L9–L29 traverse the membrane as a helical segment. An N-linked (GlcNAc...) asparagine glycan is attached at N53. Residues W78–P101 constitute an intramembrane region (pore-forming). The chain crosses the membrane as a helical span at residues V108–L128. Residues G129–N158 lie on the Cytoplasmic side of the membrane. Residues M159–S179 traverse the membrane as a helical segment. An intramembrane region (pore-forming) is located at residues W184–A207. The helical transmembrane segment at F223 to V243 threads the bilayer. Over L244–V409 the chain is Cytoplasmic.

The protein belongs to the two pore domain potassium channel (TC 1.A.1.8) family. In terms of assembly, homodimer. Heterodimer with KCNK1. Heterodimer with KCNK9. In terms of tissue distribution, very strong expression in heart, also detected in kidney, brain, skin, testis, lung, skeletal muscle, small intestine and stomach. Not detected in liver, thymus or spleen. Expressed in adrenal glands mainly in zona glomerulosa and zona fasciculata of the cortex. Expressed at higher levels in brown and beige than in white adipocytes.

Its subcellular location is the cell membrane. The enzyme catalyses K(+)(in) = K(+)(out). It carries out the reaction Na(+)(in) = Na(+)(out). Its activity is regulated as follows. Activated by halothane and isoflurane. Inhibited by external acidification, diacylglycerol and anandamide. Inactivated by barium. Its function is as follows. K(+) channel that conducts voltage-dependent outward rectifying currents upon membrane depolarization. Voltage sensing is coupled to K(+) electrochemical gradient in an 'ion flux gating' mode where outward but not inward ion flow opens the gate. Changes ion selectivity and becomes permeable to Na(+) ions in response to extracellular acidification. Protonation of the pH sensor His-98 stabilizes C-type inactivation conformation likely converting the channel from outward K(+)-conducting, to inward Na(+)-conducting to nonconductive state. Homo- and heterodimerizes to form functional channels with distinct regulatory and gating properties. Allows K(+) currents with fast-gating kinetics important for the repolarization and hyperpolarization phases of action potentials. In cerebellar granule cells, heteromeric KCNK3:KCNK9 channel may hyperpolarize the resting membrane potential to limit intrinsic neuronal excitability, but once the action potential threshold is reached, it may support high-frequency action potential firing and increased neuronal excitability. Dispensable for central chemosensory respiration i.e. breathing controlled by brainstem CO2/pH, it rather conducts pH-sensitive currents and controls the firing rate of serotonergic raphe neurons involved in potentiation of the respiratory chemoreflex. Additionally, imparts chemosensitivity to type 1 cells in carotid bodies which respond to a decrease in arterial oxygen pressure or an increase in carbon dioxide pressure or pH to initiate adaptive changes in pulmonary ventilation. In adrenal gland, contributes to the maintenance of a hyperpolarized resting membrane potential of aldosterone-producing cells at zona glomerulosa and limits aldosterone release as part of a regulatory mechanism that controls arterial blood pressure and electrolyte homeostasis. In brown adipocytes, mediates K(+) efflux that counteracts norepinephrine-induced membrane depolarization, limits Ca(2+) efflux and downstream cAMP and PKA signaling, ultimately attenuating lipid oxidation and adaptive thermogenesis. In Mus musculus (Mouse), this protein is Potassium channel subfamily K member 3.